A 90-amino-acid polypeptide reads, in one-letter code: Probable Fe(2+)-trafficking protein (90 aa).

Belongs to the Fe(2+)-trafficking protein family. Monomer.

Could be a mediator in iron transactions between iron acquisition and iron-requiring processes, such as synthesis and/or repair of Fe-S clusters in biosynthetic enzymes. This chain is Probable Fe(2+)-trafficking protein, found in Hamiltonella defensa subsp. Acyrthosiphon pisum (strain 5AT).